The following is a 95-amino-acid chain: Protein YY1 (95 aa).

The first 26 residues, 1–26, serve as a signal peptide directing secretion; sequence MAVTRTALLVVLVAGAMTMTMRGAEA. Intrachain disulfides connect cysteine 31-cysteine 72, cysteine 41-cysteine 61, cysteine 62-cysteine 87, and cysteine 74-cysteine 94.

This sequence belongs to the A9/FIL1 family. Anther.

It localises to the secreted. The protein is Protein YY1 of Oryza sativa subsp. japonica (Rice).